The chain runs to 197 residues: Dephospho-CoA kinase (197 aa).

The 195-residue stretch at 3–197 (ILGLTGSIAM…TGCLVGQGSR (195 aa)) folds into the DPCK domain. 11–16 (AMGKST) provides a ligand contact to ATP.

The protein belongs to the CoaE family.

It localises to the cytoplasm. It carries out the reaction 3'-dephospho-CoA + ATP = ADP + CoA + H(+). It functions in the pathway cofactor biosynthesis; coenzyme A biosynthesis; CoA from (R)-pantothenate: step 5/5. Catalyzes the phosphorylation of the 3'-hydroxyl group of dephosphocoenzyme A to form coenzyme A. In Zymomonas mobilis subsp. mobilis (strain ATCC 31821 / ZM4 / CP4), this protein is Dephospho-CoA kinase.